The following is a 142-amino-acid chain: Hemoglobin subunit beta (142 aa).

Residues 3–142 form the Globin domain; that stretch reads KLSEDQEHYI…VAEALSSNYH (140 aa). Residues His60 and His89 each coordinate heme b.

The protein belongs to the globin family. Heterotetramer of two alpha chains and two beta chains. As to expression, red blood cells.

Its function is as follows. Involved in oxygen transport from gills to the various peripheral tissues. The chain is Hemoglobin subunit beta (HBB) from Hemitrygon akajei (Red stingray).